The chain runs to 203 residues: Protein GrpE (203 aa).

The segment covering 1 to 10 has biased composition (basic and acidic residues); it reads MSNESIKAEQ. The segment at 1–20 is disordered; it reads MSNESIKAEQDLIQEGVESE.

Belongs to the GrpE family. Homodimer.

The protein resides in the cytoplasm. Functionally, participates actively in the response to hyperosmotic and heat shock by preventing the aggregation of stress-denatured proteins, in association with DnaK and GrpE. It is the nucleotide exchange factor for DnaK and may function as a thermosensor. Unfolded proteins bind initially to DnaJ; upon interaction with the DnaJ-bound protein, DnaK hydrolyzes its bound ATP, resulting in the formation of a stable complex. GrpE releases ADP from DnaK; ATP binding to DnaK triggers the release of the substrate protein, thus completing the reaction cycle. Several rounds of ATP-dependent interactions between DnaJ, DnaK and GrpE are required for fully efficient folding. The protein is Protein GrpE of Shewanella sp. (strain MR-4).